Reading from the N-terminus, the 248-residue chain is Type III pantothenate kinase (248 aa).

Residue 6-13 participates in ATP binding; the sequence is DCGNSLIK. Substrate contacts are provided by residues Tyr92 and 99-102; that span reads GLDR. The active-site Proton acceptor is the Asp101. A K(+)-binding site is contributed by Asp121. Residue Thr124 participates in ATP binding. Substrate is bound at residue Thr180.

The protein belongs to the type III pantothenate kinase family. Homodimer. It depends on NH4(+) as a cofactor. The cofactor is K(+).

The protein resides in the cytoplasm. It carries out the reaction (R)-pantothenate + ATP = (R)-4'-phosphopantothenate + ADP + H(+). The protein operates within cofactor biosynthesis; coenzyme A biosynthesis; CoA from (R)-pantothenate: step 1/5. Functionally, catalyzes the phosphorylation of pantothenate (Pan), the first step in CoA biosynthesis. This is Type III pantothenate kinase from Pseudomonas aeruginosa (strain LESB58).